We begin with the raw amino-acid sequence, 156 residues long: Protein LlR18A (156 aa).

Trans-zeatin-binding residues include asparagine 8 and aspartate 28. Ca(2+) is bound by residues proline 32 and isoleucine 38. Trans-zeatin is bound by residues lysine 54, aspartate 133, and lysine 136.

The protein belongs to the BetVI family. As to expression, expressed constitutively in roots.

It localises to the cytoplasm. The protein localises to the cytosol. Class II ribonuclease (RNase). Binds to cytokinins. Interacts with melatonin. The polypeptide is Protein LlR18A (LLR18A) (Lupinus luteus (European yellow lupine)).